The chain runs to 471 residues: Tryptophanase (471 aa).

An N6-acetyllysine mark is found at lysine 5, lysine 115, and lysine 156. At lysine 270 the chain carries N6-(pyridoxal phosphate)lysine. An N6-acetyllysine modification is found at lysine 450.

The protein belongs to the beta-eliminating lyase family. As to quaternary structure, homotetramer. The cofactor is pyridoxal 5'-phosphate.

The catalysed reaction is L-tryptophan + H2O = indole + pyruvate + NH4(+). It functions in the pathway amino-acid degradation; L-tryptophan degradation via pyruvate pathway; indole and pyruvate from L-tryptophan: step 1/1. The chain is Tryptophanase from Escherichia coli (strain SMS-3-5 / SECEC).